Consider the following 813-residue polypeptide: Nuclear pore complex protein 5 (813 aa).

Belongs to the nucleoporin Nup84/Nup107 family. Part of the nuclear pore complex (NPC). May interact with mdf-1.

It localises to the nucleus. The protein localises to the nuclear pore complex. Its subcellular location is the chromosome. It is found in the centromere. The protein resides in the kinetochore. It localises to the nucleus membrane. Its function is as follows. Involved in kinetochore assembly and chromosome segregation during embryonic mitosis. Required for the localization of the NDC80 complex member him-10, the chromosomal passenger complex component air-2 and nuclear pore complex proteins npp-23 and npp-15 to kinetochores during metaphase. Required for npp-23 localization to the nuclear envelope during interphase. Recruits mdf-1, a component of the spindle assembly checkpoint, to the nuclear envelope. Appears dispensable for the assembly of the nuclear pore complex and for nuclear protein import. In Caenorhabditis elegans, this protein is Nuclear pore complex protein 5.